A 471-amino-acid polypeptide reads, in one-letter code: Argininosuccinate lyase (471 aa).

This sequence belongs to the lyase 1 family. Argininosuccinate lyase subfamily.

The protein localises to the cytoplasm. The catalysed reaction is 2-(N(omega)-L-arginino)succinate = fumarate + L-arginine. It functions in the pathway amino-acid biosynthesis; L-arginine biosynthesis; L-arginine from L-ornithine and carbamoyl phosphate: step 3/3. This is Argininosuccinate lyase from Ralstonia pickettii (strain 12J).